A 256-amino-acid chain; its full sequence is 7-cyano-7-deazaguanine synthase (256 aa).

The disordered stretch occupies residues 1-22 (MTDASADALTSPSNSGASQDTS). Residues 8–22 (ALTSPSNSGASQDTS) show a composition bias toward polar residues. ATP is bound at residue 30 to 40 (LSGGLDSVTCL). Zn(2+) is bound by residues cysteine 220, cysteine 230, cysteine 233, and cysteine 236.

The protein belongs to the QueC family. Requires Zn(2+) as cofactor.

It catalyses the reaction 7-carboxy-7-deazaguanine + NH4(+) + ATP = 7-cyano-7-deazaguanine + ADP + phosphate + H2O + H(+). It participates in purine metabolism; 7-cyano-7-deazaguanine biosynthesis. In terms of biological role, catalyzes the ATP-dependent conversion of 7-carboxy-7-deazaguanine (CDG) to 7-cyano-7-deazaguanine (preQ(0)). The chain is 7-cyano-7-deazaguanine synthase from Psychrobacter sp. (strain PRwf-1).